A 1458-amino-acid chain; its full sequence is Probable serine/threonine-protein kinase yakA (1458 aa).

Over residues 32–76 the composition is skewed to low complexity; it reads NNSLNSNDNTNTTNNNNNNNNNNNNNNNNNNNNNNNNNINNNNNN. Residues 32 to 83 are disordered; the sequence is NNSLNSNDNTNTTNNNNNNNNNNNNNNNNNNNNNNNNNINNNNNNGGMVGVN. A Protein kinase domain is found at 205-548; sequence YKVLDSLGQG…PMQAKEHPFI (344 aa). ATP-binding positions include 211 to 219 and lysine 234; that span reads LGQGTFGQV. The Proton acceptor role is filled by aspartate 332. Disordered stretches follow at residues 441–462 and 545–571; these read HRHLGSNSDDNNNNNNNNNGKP and HPFITGQPYNGPFIPDPSKKRHFTYSQ. The span at 446–459 shows a compositional bias: low complexity; it reads SNSDDNNNNNNNNN. The stretch at 588–643 forms a coiled coil; it reads NQHQLFQQLQQQQQQQQQQQQQQQQQQQQQQQQQQQQQQHNQFQQQQQQQQQQQQS. Composition is skewed to low complexity over residues 659-709, 791-800, 808-853, and 861-870; these read TPYT…SFNF, SWGSDSSSIS, QKQM…NNVN, and DIPSDSFSSS. 2 disordered regions span residues 659–714 and 791–874; these read TPYT…NESF and SWGS…EGMD. Residues 878–927 are a coiled coil; sequence NLYQQQQQQQQQQQQQQQQQQQQQQQQQQQQQQQQQQLQYQQQFQTLQDL. Disordered stretches follow at residues 930–1095, 1128–1161, 1233–1347, 1375–1399, and 1435–1458; these read EGEK…PQMI, NQQNTPHLTPSNSSTNLLGKSASSPLKNSSGGAI, DYRP…SYQY, QQQQYKKDTPSLMMSPPMNGLKTSS, and QQLQQQQAPPQNRKQVVIGSYRET. Composition is skewed to low complexity over residues 961 to 988, 1016 to 1042, and 1064 to 1093; these read QQTNNTQQQQQQQQQQQQQQQQQQQQQQ, QQFQQQQYKQQQKNLHHQQQQQQRFMQ, and QPLHQTYIPQQQQQQQQQQQQSQPTPFTPQ. Composition is skewed to polar residues over residues 1128-1158 and 1233-1245; these read NQQNTPHLTPSNSSTNLLGKSASSPLKNSSG and DYRPQLFNKQSPP. Low complexity-rich tracts occupy residues 1246-1255 and 1264-1279; these read SSYNSNKSFY and NNNNNNSRPTNQNFSN. A compositionally biased stretch (polar residues) spans 1280-1291; the sequence is SLLPSQQQNVIF. Positions 1292-1309 are enriched in low complexity; it reads PQNSPPSSYNSSNSLSKS. 2 stretches are compositionally biased toward polar residues: residues 1310-1321 and 1331-1344; these read GGNTVKNNSNTG and QRFNSTNNLLSGGS. 2 coiled-coil regions span residues 1346-1383 and 1409-1442; these read QYQQQQQQQQQQQQQQQQQQQQQQQQQQQQQQQYKKDT and RYQYQQQQLQQQFQQQQQQQQQQQIQQQLQQQQA.

This sequence belongs to the protein kinase superfamily. CMGC Ser/Thr protein kinase family. MNB/DYRK subfamily.

The protein localises to the cytoplasm. It carries out the reaction L-seryl-[protein] + ATP = O-phospho-L-seryl-[protein] + ADP + H(+). The catalysed reaction is L-threonyl-[protein] + ATP = O-phospho-L-threonyl-[protein] + ADP + H(+). It catalyses the reaction L-tyrosyl-[protein] + ATP = O-phospho-L-tyrosyl-[protein] + ADP + H(+). In terms of biological role, general sensor of environmental conditions, such as heat stress, effecting changes through pkaC. Essential for survival to nitrosoative and oxidative stresses. Required for cell cycle control, not only at the onset but also during development (aggregation process and postaggregative development). This Dictyostelium discoideum (Social amoeba) protein is Probable serine/threonine-protein kinase yakA (yakA).